Here is a 194-residue protein sequence, read N- to C-terminus: Thymidine kinase (194 aa).

ATP contacts are provided by residues 15–22 (GPMFSGKS) and 89–92 (DEAH). Catalysis depends on E90, which acts as the Proton acceptor. C146, C149, C178, and C181 together coordinate Zn(2+).

The protein belongs to the thymidine kinase family. Homotetramer.

It is found in the cytoplasm. It carries out the reaction thymidine + ATP = dTMP + ADP + H(+). This Metamycoplasma arthritidis (strain 158L3-1) (Mycoplasma arthritidis) protein is Thymidine kinase.